The chain runs to 467 residues: Coiled-coil domain-containing protein 174 (467 aa).

Disordered stretches follow at residues 47–76 (INKKPSIWSKQNAGVTSRAEKDAEQKLEEQ) and 129–163 (GATRESQIEEERDDDDKEEFSDKDIPPPQDPSEEW). Positions 64 to 76 (RAEKDAEQKLEEQ) are enriched in basic and acidic residues. The stretch at 64 to 99 (RAEKDAEQKLEEQKTLDKAREKLEEKAKLYEKMTKG) forms a coiled coil. Residues 136 to 147 (IEEERDDDDKEE) show a composition bias toward acidic residues. Ser198 is modified (phosphoserine). A coiled-coil region spans residues 268-310 (LEMLREQTTDQRIKRENIKEKRKAMLEARLAKLRQKKMKKSKE). Disordered stretches follow at residues 301–365 (RQKK…IREW) and 379–454 (KQSE…VTFQ). Basic and acidic residues-rich tracts occupy residues 349–365 (IQERRDTKPGVPHIREW) and 379–390 (KQSELRAERDPE). Residues 406–415 (PMSSQPQSRP) are compositionally biased toward polar residues. Positions 423 to 446 (GHSSGQSQEPSSSHTSTPASESSP) are enriched in low complexity.

The protein resides in the nucleus. Its function is as follows. Probably involved in neuronal development. The sequence is that of Coiled-coil domain-containing protein 174 (Ccdc174) from Mus musculus (Mouse).